A 462-amino-acid chain; its full sequence is Glutamate decarboxylase alpha (462 aa).

Lys-273 carries the post-translational modification N6-(pyridoxal phosphate)lysine.

Belongs to the group II decarboxylase family. The cofactor is pyridoxal 5'-phosphate.

The catalysed reaction is L-glutamate + H(+) = 4-aminobutanoate + CO2. Converts internalized glutamate to GABA and increases the internal pH. Involved in glutamate-dependent acid resistance in gastric fluid. This chain is Glutamate decarboxylase alpha (gadA), found in Listeria monocytogenes serovar 1/2a (strain ATCC BAA-679 / EGD-e).